The primary structure comprises 286 residues: Shikimate dehydrogenase (NADP(+)) (286 aa).

Residues 22-24 (SRS) and T71 contribute to the shikimate site. Catalysis depends on K75, which acts as the Proton acceptor. E87 serves as a coordination point for NADP(+). Shikimate-binding residues include N96 and D111. NADP(+) is bound by residues 136-140 (GAGGA), 160-165 (NRTPER), and I225. Y227 contacts shikimate. An NADP(+)-binding site is contributed by G248.

This sequence belongs to the shikimate dehydrogenase family. In terms of assembly, homodimer.

The enzyme catalyses shikimate + NADP(+) = 3-dehydroshikimate + NADPH + H(+). Its pathway is metabolic intermediate biosynthesis; chorismate biosynthesis; chorismate from D-erythrose 4-phosphate and phosphoenolpyruvate: step 4/7. Functionally, involved in the biosynthesis of the chorismate, which leads to the biosynthesis of aromatic amino acids. Catalyzes the reversible NADPH linked reduction of 3-dehydroshikimate (DHSA) to yield shikimate (SA). The polypeptide is Shikimate dehydrogenase (NADP(+)) (Rhizobium meliloti (strain 1021) (Ensifer meliloti)).